A 156-amino-acid chain; its full sequence is Transcription elongation factor GreA (156 aa).

Residues 1–84 (MAKYTISKHR…IEDVLRSTDE (84 aa)) are a coiled coil.

The protein belongs to the GreA/GreB family.

In terms of biological role, necessary for efficient RNA polymerase transcription elongation past template-encoded arresting sites. The arresting sites in DNA have the property of trapping a certain fraction of elongating RNA polymerases that pass through, resulting in locked ternary complexes. Cleavage of the nascent transcript by cleavage factors such as GreA or GreB allows the resumption of elongation from the new 3'terminus. GreA releases sequences of 2 to 3 nucleotides. The sequence is that of Transcription elongation factor GreA from Ureaplasma parvum serovar 3 (strain ATCC 27815 / 27 / NCTC 11736).